A 348-amino-acid chain; its full sequence is Protein RecA (348 aa).

An ATP-binding site is contributed by 65–72 (GPESSGKT). The interval 328 to 348 (SKPQAETSARLATQEELADDY) is disordered.

This sequence belongs to the RecA family.

Its subcellular location is the cytoplasm. In terms of biological role, can catalyze the hydrolysis of ATP in the presence of single-stranded DNA, the ATP-dependent uptake of single-stranded DNA by duplex DNA, and the ATP-dependent hybridization of homologous single-stranded DNAs. It interacts with LexA causing its activation and leading to its autocatalytic cleavage. This chain is Protein RecA, found in Ectopseudomonas oleovorans (Pseudomonas oleovorans).